We begin with the raw amino-acid sequence, 68 residues long: Large ribosomal subunit protein bL32 (68 aa).

The segment at 1–20 is disordered; sequence MAVPQNRVTRSRRNMRRSHD.

This sequence belongs to the bacterial ribosomal protein bL32 family.

The sequence is that of Large ribosomal subunit protein bL32 from Cereibacter sphaeroides (strain ATCC 17029 / ATH 2.4.9) (Rhodobacter sphaeroides).